The sequence spans 600 residues: Single-strand DNA endonuclease 1 (600 aa).

An N-domain region spans residues 1–97 (MGVKYLWDVL…KRRLKARFEI (97 aa)). The interval 2 to 97 (GVKYLWDVLE…KRRLKARFEI (96 aa)) is XPG-N domain. Mg(2+) contacts are provided by D30, D76, E142, E144, D163, D165, and D215. The XPG-I domain stretch occupies residues 130-215 (STLGILCLDG…IALALLLGSD (86 aa)). 2 I-domain regions span residues 130-218 (STLG…DYSQ) and 130-219 (STLG…YSQG). Residues 215-353 (DYSQGVRGLR…ILPKVAERNL (139 aa)) are 5'-3' exonuclease domain. The segment at 433–458 (MAAKKKKPKPKQKQKETSSPTKSSSL) is disordered. The span at 435–444 (AKKKKPKPKQ) shows a compositional bias: basic residues.

It belongs to the XPG/RAD2 endonuclease family. GEN subfamily. Mg(2+) serves as cofactor.

The protein resides in the nucleus. Endonuclease which cleaves flap structures at the junction between single-stranded DNA and double-stranded DNA with a specific cleavage site in the 5' overhang strand exactly one nucleotide 3' of the branch point. Structure- and sequence-specific nuclease that resolves holliday junctions (HJs) by symmetrically oriented incisions in two opposing strands near the junction point, thus leading to ligatable products; HJs are physical links between homologous DNA molecules that arise as central intermediary structures during homologous recombination and repair in meiotic and somatic cells. Structure-specific nuclease with 5'-flap endonuclease activity, preferentially cleaving static flaps 5' overhang strand exactly one nucleotide in the 3' direction of the branch point and, to lower extent, on the two neighboring positions. Also able to cleave double-stranded flap strand 1 one nucleotide in the 3' direction of the branch point. Together with MUS81, essential for the resolution of toxic replication structures to ensure genome stability, and to maintain telomere integrity and replication. This is Single-strand DNA endonuclease 1 from Arabidopsis thaliana (Mouse-ear cress).